The chain runs to 179 residues: Natural killer cells antigen CD94 (179 aa).

At 1-10 (MAVFKTTLWR) the chain is on the cytoplasmic side. Residues 11 to 31 (LISGTLGIICLSLMATLGILL) traverse the membrane as a helical; Signal-anchor for type II membrane protein segment. At 32-179 (KNSFTKLSVE…NRYICKQQLI (148 aa)) the chain is on the extracellular side. 2 cysteine pairs are disulfide-bonded: cysteine 58–cysteine 70 and cysteine 61–cysteine 72. The C-type lectin domain occupies 68–175 (YRCNCYFISS…CETKNRYICK (108 aa)). Asparagine 83 and asparagine 132 each carry an N-linked (GlcNAc...) asparagine glycan. Disulfide bonds link cysteine 89/cysteine 174 and cysteine 152/cysteine 166.

As to quaternary structure, can form disulfide-bonded heterodimer with NKG2 family members KLRC1 and KLRC2. KLRD1-KLRC1 heterodimer interacts with peptide-bound MHC-E-B2M heterotrimeric complex. KLRD1 plays a prominent role in directly interacting with MHC-E. KLRD1-KLRC1 interacts with much higher affinity with peptide-bound MHC-E-B2M than KLRD1-KLRC2. Interacts with the adapter protein TYROBP/DAP12; this interaction is required for cell surface expression and cell activation. In terms of tissue distribution, natural killer cells.

It localises to the cell membrane. In terms of biological role, immune receptor involved in self-nonself discrimination. In complex with KLRC1 or KLRC2 on cytotoxic and regulatory lymphocyte subsets, recognizes non-classical major histocompatibility (MHC) class Ib molecule MHC-E loaded with self-peptides derived from the signal sequence of classical MHC class Ia and non-classical MHC class Ib molecules. Enables cytotoxic cells to monitor the expression of MHC class I molecules in healthy cells and to tolerate self. Primarily functions as a ligand binding subunit as it lacks the capacity to signal. KLRD1-KLRC1 acts as an immune inhibitory receptor. Key inhibitory receptor on natural killer (NK) cells that regulates their activation and effector functions. Dominantly counteracts T cell receptor signaling on a subset of memory/effector CD8-positive T cells as part of an antigen-driven response to avoid autoimmunity. On intraepithelial CD8-positive gamma-delta regulatory T cells triggers TGFB1 secretion, which in turn limits the cytotoxic programming of intraepithelial CD8-positive alpha-beta T cells, distinguishing harmless from pathogenic antigens. In MHC-E-rich tumor microenvironment, acts as an immune inhibitory checkpoint and may contribute to progressive loss of effector functions of NK cells and tumor-specific T cells, a state known as cell exhaustion. Upon MHC-E-peptide binding, transmits intracellular signals through KLRC1 immunoreceptor tyrosine-based inhibition motifs (ITIMs) by recruiting INPP5D/SHIP-1 and INPPL1/SHIP-2 tyrosine phosphatases to ITIMs, and ultimately opposing signals transmitted by activating receptors through dephosphorylation of proximal signaling molecules. Functionally, KLRD1-KLRC2 acts as an immune activating receptor. On cytotoxic lymphocyte subsets recognizes MHC-E loaded with signal sequence-derived peptides from non-classical MHC class Ib MHC-G molecules, likely playing a role in the generation and effector functions of adaptive NK cells and in maternal-fetal tolerance during pregnancy. Regulates the effector functions of terminally differentiated cytotoxic lymphocyte subsets, and in particular may play a role in adaptive NK cell response to viral infection. Upon MHC-E-peptide binding, transmits intracellular signals via the adapter protein TYROBP/DAP12, triggering the phosphorylation of proximal signaling molecules and cell activation. The chain is Natural killer cells antigen CD94 (KLRD1) from Macaca mulatta (Rhesus macaque).